The following is a 91-amino-acid chain: Large ribosomal subunit protein eL34 (91 aa).

The protein belongs to the eukaryotic ribosomal protein eL34 family.

This is Large ribosomal subunit protein eL34 from Thermofilum pendens (strain DSM 2475 / Hrk 5).